A 395-amino-acid chain; its full sequence is Dihydroorotate dehydrogenase (quinone), mitochondrial (395 aa).

The transit peptide at 1 to 10 directs the protein to the mitochondrion; not cleaved; sequence MAWRHLKKRA. Residues 1–10 lie on the Mitochondrial matrix side of the membrane; sequence MAWRHLKKRA. Residues 11-30 form a helical membrane-spanning segment; that stretch reads QDAVIILGGGGLLFASYLMA. Residues 31–395 are Mitochondrial intermembrane-facing; that stretch reads TGDERFYAEH…TDAIGADHRR (365 aa). Residues 95–99 and Ser119 each bind FMN; that span reads AGFDK. Residue Lys99 coordinates substrate. Residue 144–148 participates in substrate binding; that stretch reads NRYGF. 2 residues coordinate FMN: Asn180 and Asn211. Substrate is bound at residue 211–216; sequence NVSSPN. Ser214 (nucleophile) is an active-site residue. Lys254 and Thr282 together coordinate FMN. Substrate is bound at residue 283–284; it reads NT. FMN-binding positions include Gly305, Gly334, and 355–356; that span reads YT.

This sequence belongs to the dihydroorotate dehydrogenase family. Type 2 subfamily. Monomer. The cofactor is FMN. In terms of processing, the uncleaved transit peptide is required for mitochondrial targeting and proper membrane integration.

The protein localises to the mitochondrion inner membrane. The catalysed reaction is (S)-dihydroorotate + a quinone = orotate + a quinol. It functions in the pathway pyrimidine metabolism; UMP biosynthesis via de novo pathway; orotate from (S)-dihydroorotate (quinone route): step 1/1. Functionally, catalyzes the conversion of dihydroorotate to orotate with quinone as electron acceptor. Required for UMP biosynthesis via de novo pathway. This chain is Dihydroorotate dehydrogenase (quinone), mitochondrial (DHODH), found in Homo sapiens (Human).